The following is a 238-amino-acid chain: Pyridoxine 5'-phosphate synthase (238 aa).

A 3-amino-2-oxopropyl phosphate-binding site is contributed by Asn7. Residue 9–10 coordinates 1-deoxy-D-xylulose 5-phosphate; sequence DH. Position 18 (Arg18) interacts with 3-amino-2-oxopropyl phosphate. His43 acts as the Proton acceptor in catalysis. Residues Arg45 and His50 each coordinate 1-deoxy-D-xylulose 5-phosphate. Glu70 serves as the catalytic Proton acceptor. Residue Thr100 participates in 1-deoxy-D-xylulose 5-phosphate binding. The active-site Proton donor is His190. 3-amino-2-oxopropyl phosphate is bound by residues Gly191 and 212–213; that span reads GH.

It belongs to the PNP synthase family. As to quaternary structure, homooctamer; tetramer of dimers.

It localises to the cytoplasm. The enzyme catalyses 3-amino-2-oxopropyl phosphate + 1-deoxy-D-xylulose 5-phosphate = pyridoxine 5'-phosphate + phosphate + 2 H2O + H(+). Its pathway is cofactor biosynthesis; pyridoxine 5'-phosphate biosynthesis; pyridoxine 5'-phosphate from D-erythrose 4-phosphate: step 5/5. In terms of biological role, catalyzes the complicated ring closure reaction between the two acyclic compounds 1-deoxy-D-xylulose-5-phosphate (DXP) and 3-amino-2-oxopropyl phosphate (1-amino-acetone-3-phosphate or AAP) to form pyridoxine 5'-phosphate (PNP) and inorganic phosphate. The protein is Pyridoxine 5'-phosphate synthase of Prochlorococcus marinus (strain MIT 9215).